Reading from the N-terminus, the 902-residue chain is Translation initiation factor IF-2 (902 aa).

Composition is skewed to basic and acidic residues over residues 1 to 12 and 43 to 60; these read MVDTKTPGDKKL and VVEK…EPHA. The tract at residues 1–276 is disordered; it reads MVDTKTPGDK…KPGPQKERGR (276 aa). The span at 69-84 shows a compositional bias: pro residues; that stretch reads PAAPAPSRPAPPPAPP. Positions 111–174 are enriched in basic and acidic residues; the sequence is AKLREVEERR…ETEAKKRFGE (64 aa). Composition is skewed to low complexity over residues 181-190 and 198-237; these read AARPATAAPA and APAA…AVAA. Positions 398 to 567 constitute a tr-type G domain; it reads TRSPVVTVMG…MIALQADILD (170 aa). Residues 407 to 414 form a G1 region; that stretch reads GHVDHGKT. Position 407-414 (407-414) interacts with GTP; sequence GHVDHGKT. The segment at 432 to 436 is G2; it reads GITQH. The tract at residues 455–458 is G3; sequence DTPG. GTP-binding positions include 455 to 459 and 509 to 512; these read DTPGH and NKID. The tract at residues 509 to 512 is G4; the sequence is NKID. The segment at 545 to 547 is G5; it reads SAK.

This sequence belongs to the TRAFAC class translation factor GTPase superfamily. Classic translation factor GTPase family. IF-2 subfamily.

The protein resides in the cytoplasm. One of the essential components for the initiation of protein synthesis. Protects formylmethionyl-tRNA from spontaneous hydrolysis and promotes its binding to the 30S ribosomal subunits. Also involved in the hydrolysis of GTP during the formation of the 70S ribosomal complex. The chain is Translation initiation factor IF-2 from Bradyrhizobium diazoefficiens (strain JCM 10833 / BCRC 13528 / IAM 13628 / NBRC 14792 / USDA 110).